Here is a 367-residue protein sequence, read N- to C-terminus: AA9 family lytic polysaccharide monooxygenase A (367 aa).

An N-terminal signal peptide occupies residues 1–20; that stretch reads MKSSTFGMLALAAAAKLVSA. H21 contacts Cu(2+). Residues 37-56 form a disordered region; the sequence is GNSESGYIRSPPSNSPITDV. Cysteines 63 and 183 form a disulfide. H102 serves as a coordination point for Cu(2+). H169 serves as a coordination point for O2. Residue Y180 participates in Cu(2+) binding. The segment at 234–287 is disordered; the sequence is GASGSSSSPSASASASAPAATSAAPAPSSFTTIAKQPATSSTEAPSTENTSTTS. Low complexity-rich tracts occupy residues 235–262 and 270–287; these read ASGS…APSS and PATS…STTS. N-linked (GlcNAc...) asparagine glycosylation is present at N282. The CBM1 domain occupies 329–365; sequence GAVKEWYQCGGLNYKGSTQCEEGLTCKKWNPYYYQCI.

The protein belongs to the polysaccharide monooxygenase AA9 family. Requires Cu(2+) as cofactor.

The protein localises to the secreted. It carries out the reaction [(1-&gt;4)-beta-D-glucosyl]n+m + reduced acceptor + O2 = 4-dehydro-beta-D-glucosyl-[(1-&gt;4)-beta-D-glucosyl]n-1 + [(1-&gt;4)-beta-D-glucosyl]m + acceptor + H2O.. In terms of biological role, lytic polysaccharide monooxygenase (LPMO) that depolymerizes crystalline and amorphous polysaccharides via the oxidation of scissile alpha- or beta-(1-4)-glycosidic bonds, yielding C4 oxidation products. Catalysis by LPMOs requires the reduction of the active-site copper from Cu(II) to Cu(I) by a reducing agent and H(2)O(2) or O(2) as a cosubstrate. Active on cellulose and cello-oligosaccharides, as well as plant cell wall-derived hemicellulosic polysaccharides. Also active on cello-oligosaccharides such as cellohexaose, cellopentaose or cellotetraose. The protein is AA9 family lytic polysaccharide monooxygenase A of Aspergillus oryzae (strain ATCC 42149 / RIB 40) (Yellow koji mold).